The primary structure comprises 474 residues: Tocopherol cyclase, chloroplastic (474 aa).

Residues 1-65 (MNLAVAAALP…TPTPQDRSLR (65 aa)) constitute a chloroplast transit peptide.

Present in all green tissues, both in bundle sheath and in mesophyll cells.

It localises to the plastid. The protein localises to the chloroplast. The enzyme catalyses gamma-tocopherol = 2,3-dimethyl-6-phytylbenzene-1,4-diol. It participates in cofactor biosynthesis; tocopherol biosynthesis. In terms of biological role, involved in the synthesis of tocopherols (vitamin E), which presumably protect photosynthetic complexes from oxidative stress. Catalyzes the conversion of 2,3-dimethyl-5-phytyl-1,4-hydroquinone (DMPQ) to gamma-tocopherol. The protein is Tocopherol cyclase, chloroplastic of Zea mays (Maize).